The following is a 152-amino-acid chain: Syntaxin-8A (152 aa).

Over residues 1–14 (MNNNNNFNSNFNSN) the composition is skewed to low complexity. The disordered stretch occupies residues 1–22 (MNNNNNFNSNFNSNRISSTQPY). At 1 to 131 (MNNNNNFNSN…LTQQSKTTGY (131 aa)) the chain is on the cytoplasmic side. A t-SNARE coiled-coil homology domain is found at 60-122 (KRDMEEQDKM…RNTTKNLITL (63 aa)). The helical; Anchor for type IV membrane protein transmembrane segment at 132–152 (CSAICFLLLVLLVIIILASVL) threads the bilayer.

It belongs to the syntaxin family. As to quaternary structure, component of the SNARE complex composed of syn7A, syn8A, vamp7A and vti1A.

It is found in the endosome membrane. In terms of biological role, involved in the targeting and/or fusion of transport vesicles to their target membrane during transport of proteins from the early endosome to the lysosome. Required for fusion of late endosomes with lysosomes and homotypic lysosomal fusion. This is Syntaxin-8A from Dictyostelium discoideum (Social amoeba).